Here is a 101-residue protein sequence, read N- to C-terminus: Protein S100-A4 (101 aa).

N-acetylalanine is present on Ala2. EF-hand domains follow at residues 12-47 (IVST…SFLG) and 50-85 (TDEA…IAMM). Residues Lys28 and Glu33 each contribute to the Ca(2+) site. The residue at position 35 (Lys35) is an N6-acetyllysine. Ca(2+) contacts are provided by Asp63, Asn65, Asp67, Glu69, and Glu74.

It belongs to the S-100 family. Homodimer. Interacts with PPFIBP1 in a calcium-dependent mode. Interacts with PGLYRP1; this complex acts as a chemoattractant that promotes lymphocyte movement. Interacts with MYH9; this interaction increases cell motility. Interacts with Annexin 2/ANXA2. Interacts with TP53; this interaction promotes TP53 degradation. Interacts with CCR5 and CXCR3. Interacts with FCGR3A; this interaction inhibits PKC-dependent phosphorylation of FCGR3A. Specifically expressed in different metastatic cells.

It localises to the secreted. The protein localises to the nucleus. Its subcellular location is the cytoplasm. Calcium-binding protein that plays a role in various cellular processes including motility, angiogenesis, cell differentiation, apoptosis, and autophagy. Increases cell motility and invasiveness by interacting with non-muscle myosin heavy chain (NMMHC) IIA/MYH9. Mechanistically, promotes filament depolymerization and increases the amount of soluble myosin-IIA, resulting in the formation of stable protrusions facilitating chemotaxis. Also modulates the pro-apoptotic function of TP53 by binding to its C-terminal transactivation domain within the nucleus and reducing its protein levels. Within the extracellular space, stimulates cytokine production including granulocyte colony-stimulating factor and CCL24 from T-lymphocytes. In addition, stimulates T-lymphocyte chemotaxis by acting as a chemoattractant complex with PGLYRP1 that promotes lymphocyte migration via CCR5 and CXCR3 receptors. The sequence is that of Protein S100-A4 (S100a4) from Mus musculus (Mouse).